Reading from the N-terminus, the 269-residue chain is 3-methyl-2-oxobutanoate hydroxymethyltransferase (269 aa).

Mg(2+) is bound by residues Asp-43 and Asp-82. 3-methyl-2-oxobutanoate contacts are provided by residues Asp-43–Ser-44, Asp-82, and Lys-110. Glu-112 is a Mg(2+) binding site. Glu-179 serves as the catalytic Proton acceptor.

The protein belongs to the PanB family. Homodecamer; pentamer of dimers. Mg(2+) is required as a cofactor.

The protein resides in the cytoplasm. The enzyme catalyses 3-methyl-2-oxobutanoate + (6R)-5,10-methylene-5,6,7,8-tetrahydrofolate + H2O = 2-dehydropantoate + (6S)-5,6,7,8-tetrahydrofolate. It functions in the pathway cofactor biosynthesis; (R)-pantothenate biosynthesis; (R)-pantoate from 3-methyl-2-oxobutanoate: step 1/2. Catalyzes the reversible reaction in which hydroxymethyl group from 5,10-methylenetetrahydrofolate is transferred onto alpha-ketoisovalerate to form ketopantoate. This Acinetobacter baumannii (strain SDF) protein is 3-methyl-2-oxobutanoate hydroxymethyltransferase.